A 360-amino-acid chain; its full sequence is Nicotinate-nucleotide--dimethylbenzimidazole phosphoribosyltransferase (360 aa).

Residue Glu-327 is the Proton acceptor of the active site.

It belongs to the CobT family.

It catalyses the reaction 5,6-dimethylbenzimidazole + nicotinate beta-D-ribonucleotide = alpha-ribazole 5'-phosphate + nicotinate + H(+). It participates in nucleoside biosynthesis; alpha-ribazole biosynthesis; alpha-ribazole from 5,6-dimethylbenzimidazole: step 1/2. Its function is as follows. Catalyzes the synthesis of alpha-ribazole-5'-phosphate from nicotinate mononucleotide (NAMN) and 5,6-dimethylbenzimidazole (DMB). The chain is Nicotinate-nucleotide--dimethylbenzimidazole phosphoribosyltransferase from Shewanella baltica (strain OS155 / ATCC BAA-1091).